We begin with the raw amino-acid sequence, 569 residues long: 4-hydroxy-7-methoxy-3-oxo-3,4-dihydro-2H-1,4-benzoxazin-2-yl glucoside beta-D-glucosidase 1b, chloroplastic (569 aa).

Residues 1–50 (MALLAAATLNPTTHLSLRSRAGRNSENLWLRSTASSQKSKGRFCNLTIRA) constitute a chloroplast transit peptide. Residues Gln-92, His-194, and 239-240 (NE) contribute to the a beta-D-glucoside site. Glu-240 (proton donor) is an active-site residue. The cysteines at positions 259 and 265 are disulfide-linked. Residues Tyr-383, Glu-456, Trp-504, 511–512 (EW), and Phe-520 each bind a beta-D-glucoside. Residue Glu-456 is the Nucleophile of the active site.

The protein belongs to the glycosyl hydrolase 1 family. In terms of assembly, homo- and heterohexamers. In terms of tissue distribution, expressed in young seedlings early after germination.

Its subcellular location is the plastid. It is found in the chloroplast. The catalysed reaction is Hydrolysis of terminal, non-reducing beta-D-glucosyl residues with release of beta-D-glucose.. It catalyses the reaction DIMBOA beta-D-glucoside + H2O = DIMBOA + D-glucose. The enzyme catalyses DIBOA beta-D-glucoside + H2O = DIBOA + D-glucose. Its function is as follows. Acts in defense of young plant parts against pests via the production of hydroxamic acids from hydroxamic acid glucosides. Enzymatic activity is highly correlated with plant growth. The preferred substrate is DIMBOA-beta-D-glucoside. The protein is 4-hydroxy-7-methoxy-3-oxo-3,4-dihydro-2H-1,4-benzoxazin-2-yl glucoside beta-D-glucosidase 1b, chloroplastic (GLU1B) of Triticum aestivum (Wheat).